Reading from the N-terminus, the 291-residue chain is Mitochondrial thiamine pyrophosphate carrier 1 (291 aa).

6 helical membrane passes run 12–31, 83–99, 120–141, 167–191, 214–230, and 265–282; these read GATA…GAVA, IMYI…YSMF, SLIV…FDLL, GGLA…GLMF, FCGF…TFPL, and GFGI…VSLF. 3 Solcar repeats span residues 15 to 102, 115 to 200, and 207 to 290; these read ASVY…FSKA, RPSN…AREV, and NIPF…VLNG.

The protein belongs to the mitochondrial carrier (TC 2.A.29) family.

Its subcellular location is the mitochondrion inner membrane. Mitochondrial transporter that mediates uptake of thiamine pyrophosphate (ThPP) into mitochondria. This chain is Mitochondrial thiamine pyrophosphate carrier 1 (TPC1), found in Meyerozyma guilliermondii (strain ATCC 6260 / CBS 566 / DSM 6381 / JCM 1539 / NBRC 10279 / NRRL Y-324) (Yeast).